Here is a 691-residue protein sequence, read N- to C-terminus: Replication and transcription activator (691 aa).

Thr-366 and Thr-367 each carry an O-linked (GlcNAc) threonine; by host glycan. Disordered stretches follow at residues 482 to 582 (EASG…SLPP) and 626 to 677 (LDTP…QESG). The span at 504–513 (TAAATAAEAT) shows a compositional bias: low complexity. Residues 515-531 (PKRKQRSKERSSKKRKA) show a composition bias toward basic residues. Low complexity predominate over residues 539–556 (TTPSTTTPGTSLGSITTP). A compositionally biased stretch (polar residues) spans 655–677 (EYTQLQPVRATSATPANEVQESG).

The protein belongs to the herpesviridae TAF50 family. As to quaternary structure, homotetramer. Interacts with KTA/ORF57. Interacts with host PARP1; this interaction negatively regulates RTA/ORF50 transactivation activity. Interacts with host SMC5 and SMC6; these interactions remove the repressive chromatin structure to allow viral reactivation. Interacts with host POU2F1; this interaction enhances RTA/ORF50-mediated transactivation of several viral promoters including K-bZIP promoter.

It is found in the host nucleus. It carries out the reaction S-ubiquitinyl-[E2 ubiquitin-conjugating enzyme]-L-cysteine + [acceptor protein]-L-lysine = [E2 ubiquitin-conjugating enzyme]-L-cysteine + N(6)-ubiquitinyl-[acceptor protein]-L-lysine.. Transcriptional transactivator that is necessary and sufficient for reactivation of the virus from latency. Acts post-transcriptionally and transcriptionally to regulate viral lytic gene expression and synergistically with ORF57 activates certain early and late viral promoters including its own promoter. Autostimulation on its promoter is mediated by the formation of a ternary complex between ORF50 and the cellular components HGMB1 and POU2F1. Also possesses a bimodal activity in targeting proteins for degradation through using its own E3 ligase activity or by stabilizing and chaperoning host E3 ligases. These activities help to subvert the host innate and adaptive immune responses while also modulating the host transcriptome and protein landscape to promote virus production. For instance, targets the host SMC5/6 complex for ubiquitination and subsequent degradation through the ubiquitin-proteasome during reactivation while during latency, host SMC5/6 complex binds to the viral episome and condenses viral chromatin, creating a repressive chromatin structure to silence genome transcription. Hijacks the cellular E3 ligase complex RNF20/40 to increase the level of transcriptionally active RNA polymerase II on viral gene promoters thereby facilitating lytic gene expression. Acts as a SUMO-targeting ubiquitin ligase and affects general sumoylation of cellular proteins. Promotes the polyubiquitination and subsequent degradation of host MYD88 and thereby inhibits MYD88-mediated TLR4 signaling. Induces the degradation of vFLIP/ORF71 together with cellular ubiquitin ligase ITCH to prevent vFLIP-induced NF-kappa-B signaling. This is Replication and transcription activator (ORF50) from Homo sapiens (Human).